The primary structure comprises 498 residues: ATP synthase subunit beta, chloroplastic (498 aa).

ATP is bound at residue 172-179; sequence GGAGVGKT.

This sequence belongs to the ATPase alpha/beta chains family. In terms of assembly, F-type ATPases have 2 components, CF(1) - the catalytic core - and CF(0) - the membrane proton channel. CF(1) has five subunits: alpha(3), beta(3), gamma(1), delta(1), epsilon(1). CF(0) has four main subunits: a(1), b(1), b'(1) and c(9-12).

The protein localises to the plastid. The protein resides in the chloroplast thylakoid membrane. The enzyme catalyses ATP + H2O + 4 H(+)(in) = ADP + phosphate + 5 H(+)(out). Produces ATP from ADP in the presence of a proton gradient across the membrane. The catalytic sites are hosted primarily by the beta subunits. The sequence is that of ATP synthase subunit beta, chloroplastic from Buxus microphylla (Littleleaf boxwood).